The primary structure comprises 825 residues: Probable inorganic carbon transporter subunit DabA (825 aa).

4 residues coordinate Zn(2+): C334, D336, H521, and C536.

The protein belongs to the inorganic carbon transporter (TC 9.A.2) DabA family. In terms of assembly, forms a complex with DabB. Zn(2+) is required as a cofactor.

The protein localises to the cell inner membrane. In terms of biological role, part of an energy-coupled inorganic carbon pump. This Acidithiobacillus ferrooxidans (strain ATCC 23270 / DSM 14882 / CIP 104768 / NCIMB 8455) (Ferrobacillus ferrooxidans (strain ATCC 23270)) protein is Probable inorganic carbon transporter subunit DabA.